The following is a 346-amino-acid chain: MSKMRIGVLTGGGDCPGLNPAIRGIVMRALDYGDEVIGLKYGWAGLLKADTMPLSLEMVEDILEIGGTILGSSRTNPFKKEEDVQKCVENFKKLNLDALIAIGGEDTLGVASKFSKLGLPMIGVPKTIDKDLEETDYTLGFDTAVEVVVDAIKRLRDTARSHARVIVVEIMGRHAGWLALYGGLAGGADYILIPEVEPNLEDLYNHIRKLYARGRNHAVVAIAEGVQLPGFTYQKGQEGMVDAFGHIRLGGVGNVLAEEIQKNLGIETRAVILSHLQRGGSPSIRDRIMGLLLGKKAVDLVHEGKSGLFVAVKGNELVPVDITLIEGKTKNVDPAFYESVKTFFNK.

Position 13 (Gly-13) interacts with diphosphate. Residue Glu-105 participates in Mg(2+) binding. Substrate is bound by residues 127-129, Arg-164, 171-173, Glu-224, Arg-269, and 275-278; these read TID, MGR, and HLQR. Asp-129 acts as the Proton acceptor in catalysis.

Belongs to the phosphofructokinase type A (PFKA) family. Mixed-substrate PFK group III subfamily. As to quaternary structure, homodimer. Mg(2+) serves as cofactor.

Its subcellular location is the cytoplasm. The enzyme catalyses beta-D-fructose 6-phosphate + diphosphate = beta-D-fructose 1,6-bisphosphate + phosphate + H(+). Its pathway is carbohydrate degradation; glycolysis; D-glyceraldehyde 3-phosphate and glycerone phosphate from D-glucose: step 3/4. With respect to regulation, non-allosteric. Functionally, catalyzes the phosphorylation of D-fructose 6-phosphate, the first committing step of glycolysis. Uses inorganic phosphate (PPi) as phosphoryl donor instead of ATP like common ATP-dependent phosphofructokinases (ATP-PFKs), which renders the reaction reversible, and can thus function both in glycolysis and gluconeogenesis. Consistently, PPi-PFK can replace the enzymes of both the forward (ATP-PFK) and reverse (fructose-bisphosphatase (FBPase)) reactions. The protein is Pyrophosphate--fructose 6-phosphate 1-phosphotransferase of Dictyoglomus thermophilum.